A 177-amino-acid chain; its full sequence is ATP-dependent protease subunit HslV (177 aa).

Thr2 is an active-site residue. Na(+) is bound by residues Gly157, Cys160, and Thr163.

This sequence belongs to the peptidase T1B family. HslV subfamily. A double ring-shaped homohexamer of HslV is capped on each side by a ring-shaped HslU homohexamer. The assembly of the HslU/HslV complex is dependent on binding of ATP.

It localises to the cytoplasm. It catalyses the reaction ATP-dependent cleavage of peptide bonds with broad specificity.. With respect to regulation, allosterically activated by HslU binding. In terms of biological role, protease subunit of a proteasome-like degradation complex believed to be a general protein degrading machinery. This Aeromonas salmonicida (strain A449) protein is ATP-dependent protease subunit HslV.